We begin with the raw amino-acid sequence, 424 residues long: Serine--tRNA ligase (424 aa).

Residue 230-232 (TAE) participates in L-serine binding. 261-263 (RAE) contributes to the ATP binding site. Residue glutamate 284 coordinates L-serine. 348–351 (EISS) provides a ligand contact to ATP. Residue serine 384 participates in L-serine binding.

It belongs to the class-II aminoacyl-tRNA synthetase family. Type-1 seryl-tRNA synthetase subfamily. In terms of assembly, homodimer. The tRNA molecule binds across the dimer.

The protein localises to the cytoplasm. It carries out the reaction tRNA(Ser) + L-serine + ATP = L-seryl-tRNA(Ser) + AMP + diphosphate + H(+). It catalyses the reaction tRNA(Sec) + L-serine + ATP = L-seryl-tRNA(Sec) + AMP + diphosphate + H(+). It functions in the pathway aminoacyl-tRNA biosynthesis; selenocysteinyl-tRNA(Sec) biosynthesis; L-seryl-tRNA(Sec) from L-serine and tRNA(Sec): step 1/1. In terms of biological role, catalyzes the attachment of serine to tRNA(Ser). Is also able to aminoacylate tRNA(Sec) with serine, to form the misacylated tRNA L-seryl-tRNA(Sec), which will be further converted into selenocysteinyl-tRNA(Sec). The protein is Serine--tRNA ligase of Carboxydothermus hydrogenoformans (strain ATCC BAA-161 / DSM 6008 / Z-2901).